The primary structure comprises 78 residues: Toxin-like protein 10 (78 aa).

The signal sequence occupies residues 1-23 (MKATALLIAVFILFSVFGDMGYC).

Contains 4 disulfide bonds. In terms of tissue distribution, expressed by the venom gland.

It localises to the secreted. This is Toxin-like protein 10 from Urodacus yaschenkoi (Inland robust scorpion).